Reading from the N-terminus, the 177-residue chain is Inorganic pyrophosphatase (177 aa).

Positions 30, 44, and 56 each coordinate substrate. 3 residues coordinate Mg(2+): Asp-66, Asp-71, and Asp-103. Tyr-142 is a substrate binding site.

The protein belongs to the PPase family. As to quaternary structure, homohexamer. The cofactor is Mg(2+).

It localises to the cytoplasm. The catalysed reaction is diphosphate + H2O = 2 phosphate + H(+). Catalyzes the hydrolysis of inorganic pyrophosphate (PPi) forming two phosphate ions. This is Inorganic pyrophosphatase from Caulobacter vibrioides (strain ATCC 19089 / CIP 103742 / CB 15) (Caulobacter crescentus).